The sequence spans 430 residues: Enolase (430 aa).

A (2R)-2-phosphoglycerate-binding site is contributed by Gln-167. Glu-209 serves as the catalytic Proton donor. Mg(2+)-binding residues include Asp-245, Glu-286, and Asp-313. (2R)-2-phosphoglycerate-binding residues include Lys-338, Arg-367, Ser-368, and Lys-389. The active-site Proton acceptor is Lys-338.

The protein belongs to the enolase family. The cofactor is Mg(2+).

The protein resides in the cytoplasm. It is found in the secreted. The protein localises to the cell surface. The catalysed reaction is (2R)-2-phosphoglycerate = phosphoenolpyruvate + H2O. Its pathway is carbohydrate degradation; glycolysis; pyruvate from D-glyceraldehyde 3-phosphate: step 4/5. In terms of biological role, catalyzes the reversible conversion of 2-phosphoglycerate (2-PG) into phosphoenolpyruvate (PEP). It is essential for the degradation of carbohydrates via glycolysis. In Synechococcus sp. (strain CC9605), this protein is Enolase.